A 414-amino-acid chain; its full sequence is Glutamyl-tRNA reductase (414 aa).

Substrate is bound by residues 47–50, Ser-106, 111–113, and Gln-117; these read TCNR and EAQ. The active-site Nucleophile is the Cys-48. 185-190 serves as a coordination point for NADP(+); that stretch reads GAGRTG.

Belongs to the glutamyl-tRNA reductase family. Homodimer.

The catalysed reaction is (S)-4-amino-5-oxopentanoate + tRNA(Glu) + NADP(+) = L-glutamyl-tRNA(Glu) + NADPH + H(+). The protein operates within porphyrin-containing compound metabolism; protoporphyrin-IX biosynthesis; 5-aminolevulinate from L-glutamyl-tRNA(Glu): step 1/2. Its function is as follows. Catalyzes the NADPH-dependent reduction of glutamyl-tRNA(Glu) to glutamate 1-semialdehyde (GSA). This is Glutamyl-tRNA reductase from Herpetosiphon aurantiacus (strain ATCC 23779 / DSM 785 / 114-95).